The following is a 65-amino-acid chain: Small ribosomal subunit protein eS31 (65 aa).

Zn(2+)-binding residues include cysteine 36, cysteine 39, cysteine 55, and cysteine 58. Residues 36–58 (CPKCGSVMAFHREPVPRWHCGKC) form a C4-type zinc finger.

It belongs to the eukaryotic ribosomal protein eS31 family. In terms of assembly, part of the 30S ribosomal subunit. Zn(2+) is required as a cofactor.

The polypeptide is Small ribosomal subunit protein eS31 (Pyrobaculum calidifontis (strain DSM 21063 / JCM 11548 / VA1)).